A 102-amino-acid polypeptide reads, in one-letter code: Redox- and pH-responsive transcriptional regulator WhiB3 (102 aa).

The region spanning 22-86 (LCRGMDSSMF…GGLSESERDL (65 aa)) is the 4Fe-4S Wbl-type domain. Residues Cys23, Cys53, Cys56, and Cys62 each contribute to the [4Fe-4S] cluster site.

Belongs to the WhiB family. In terms of assembly, homodimer. Interacts with the C-terminal 54 residues of sigma factor SigA (RpoV). The cofactor is [4Fe-4S] cluster. In terms of processing, the 4Fe-4S cluster interacts with NO, forming a protein-bound dinitrosyliron dithiol complex. Post-translationally, the 4Fe-4S cluster interacts with O(2), leading to its degradation. Cluster loss takes about 2 hours. Once in the apo-form the cysteines oxidize to form 2 intramolecular disulfide bonds.

The protein localises to the cytoplasm. A redox-sensitive transcriptional regulator. Maintains intracellular redox homeostasis by regulating catabolic metabolism and polyketide biosynthesis. Regulates expression of the redox buffer ergothioneine (ERG) in a carbon-source-dependent manner; loss of ERG or mycothiol (MSH, the other major redox buffer in this bacteria) leads to respiratory alterations and bioenergetic deficiencies that negatively impact virulence. In response to low external pH (like that found in host macrophage phagosomes) alters endogenous gene expression leading to acid resistance; MSH and WhiB3 are probably part of a regulatory circuit that mediates gene expression upon acid stress. Regulates pathogenic lipid synthesis, coordinating proprionate flux (and other host-derived fatty acid oxidation intermediates) into methyl-branched fatty acids (polyacyltrehalose, phthiocerol dimycocerosates, sulfolipids) and the storage lipid triacylglycerol, functioning as reductive sink. During intracellular growth M.tuberculosis uses host fatty acids as an energy source, generating large quantities of proprionate and NADH/NADPH, which are toxic and highly reducing respectively. WhiB3 is thought to help dissipate proprionate and NADH/NADPH by switching to the in vivo carbon source and via lipid anabolism. Responds to NO and O(2). Regulates expression of genes encoding modular polyketide synthases such as pks2, pks3 and fbpA. The oxidized apo-form of WhiB3 binds DNA (with 2 intramolecular disulfide bonds); holo-WhiB3 (with the 4Fe-4S cluster) binds DNA considerably less well. Discriminates poorly between specific and non-specific DNA-binding. Plays a role in virulence and nutritional stress. In its apo-form can act as a protein disulfide reductase. Its function is as follows. May respond to mycothiol (MSH) redox potential (E-MSH) which decreases at pH 4.5 for up to 72 hours, indicative of cellular reductive stress; deletion of whiB3 leads to a lesser E-MSH at 72 hours, indicative of cellular oxidative stress. Probably via its effects on production of polyketide lipids, regulates host gene expression, leading to blockage of phagosome maturation. Equilibration of extra- and intracytoplasmic pH kills bacteria. The protein is Redox- and pH-responsive transcriptional regulator WhiB3 (whiB3) of Mycobacterium tuberculosis (strain ATCC 25618 / H37Rv).